A 189-amino-acid chain; its full sequence is Probable DNA-directed RNA polymerase subunit delta (189 aa).

Positions 14-81 (LSMIEVAHAI…GENVWALRTW (68 aa)) constitute an HTH HARE-type domain. Acidic residues-rich tracts occupy residues 90–100 (EVDHPEDDGDE) and 118–189 (EGDD…EDEE). Positions 90-189 (EVDHPEDDGD…DDLDDDEDEE (100 aa)) are disordered.

The protein belongs to the RpoE family. In terms of assembly, RNAP is composed of a core of 2 alpha, a beta and a beta' subunits. The core is associated with a delta subunit and one of several sigma factors.

Its function is as follows. Participates in both the initiation and recycling phases of transcription. In the presence of the delta subunit, RNAP displays an increased specificity of transcription, a decreased affinity for nucleic acids, and an increased efficiency of RNA synthesis because of enhanced recycling. The protein is Probable DNA-directed RNA polymerase subunit delta of Lactobacillus delbrueckii subsp. bulgaricus (strain ATCC BAA-365 / Lb-18).